The primary structure comprises 882 residues: Valine--tRNA ligase (882 aa).

Residues 45-55 carry the 'HIGH' region motif; sequence PNVTGKLHLGH. Positions 519 to 523 match the 'KMSKS' region motif; that stretch reads KMSKS. Residue Lys522 participates in ATP binding. The stretch at 808–877 forms a coiled coil; sequence LADLLNVEEE…DATQERIVEM (70 aa).

This sequence belongs to the class-I aminoacyl-tRNA synthetase family. ValS type 1 subfamily. Monomer.

The protein localises to the cytoplasm. It carries out the reaction tRNA(Val) + L-valine + ATP = L-valyl-tRNA(Val) + AMP + diphosphate. Functionally, catalyzes the attachment of valine to tRNA(Val). As ValRS can inadvertently accommodate and process structurally similar amino acids such as threonine, to avoid such errors, it has a 'posttransfer' editing activity that hydrolyzes mischarged Thr-tRNA(Val) in a tRNA-dependent manner. The sequence is that of Valine--tRNA ligase from Streptococcus pyogenes serotype M6 (strain ATCC BAA-946 / MGAS10394).